We begin with the raw amino-acid sequence, 255 residues long: 5-oxoprolinase subunit A (255 aa).

It belongs to the LamB/PxpA family. In terms of assembly, forms a complex composed of PxpA, PxpB and PxpC.

The enzyme catalyses 5-oxo-L-proline + ATP + 2 H2O = L-glutamate + ADP + phosphate + H(+). Its function is as follows. Catalyzes the cleavage of 5-oxoproline to form L-glutamate coupled to the hydrolysis of ATP to ADP and inorganic phosphate. In Nitrobacter winogradskyi (strain ATCC 25391 / DSM 10237 / CIP 104748 / NCIMB 11846 / Nb-255), this protein is 5-oxoprolinase subunit A.